Reading from the N-terminus, the 53-residue chain is MGMSFSHLLIVLLIIFVLFGAGKLPQVMSDLAKGLKAFKNGMQDDGSDNDKNK.

Residues 1–21 form a helical membrane-spanning segment; sequence MGMSFSHLLIVLLIIFVLFGA.

Belongs to the TatA/E family. The Tat system comprises two distinct complexes: a TatABC complex, containing multiple copies of TatA, TatB and TatC subunits, and a separate TatA complex, containing only TatA subunits. Substrates initially bind to the TatABC complex, which probably triggers association of the separate TatA complex to form the active translocon.

The protein resides in the cell inner membrane. Functionally, part of the twin-arginine translocation (Tat) system that transports large folded proteins containing a characteristic twin-arginine motif in their signal peptide across membranes. TatA could form the protein-conducting channel of the Tat system. In Rickettsia akari (strain Hartford), this protein is Sec-independent protein translocase protein TatA.